Reading from the N-terminus, the 357-residue chain is Cobalt-precorrin-5B C(1)-methyltransferase (357 aa).

This sequence belongs to the CbiD family.

The catalysed reaction is Co-precorrin-5B + S-adenosyl-L-methionine = Co-precorrin-6A + S-adenosyl-L-homocysteine. Its pathway is cofactor biosynthesis; adenosylcobalamin biosynthesis; cob(II)yrinate a,c-diamide from sirohydrochlorin (anaerobic route): step 6/10. Its function is as follows. Catalyzes the methylation of C-1 in cobalt-precorrin-5B to form cobalt-precorrin-6A. The chain is Cobalt-precorrin-5B C(1)-methyltransferase from Rhodospirillum rubrum (strain ATCC 11170 / ATH 1.1.1 / DSM 467 / LMG 4362 / NCIMB 8255 / S1).